A 110-amino-acid polypeptide reads, in one-letter code: MPELKTVGLFFITAIAEIIGCYLPYLWLREGKTIWLLIPAAISLALFAWLLTLHPAAAGRVYAAYGGVYIFTAILWLWLVDGIRPTVWDFVGVFVALLGMAIIMFSPRPA.

The next 4 helical transmembrane spans lie at 7–27, 33–53, 63–83, and 85–105; these read VGLF…PYLW, TIWL…LLTL, AAYG…VDGI, and PTVW…IIMF.

The protein belongs to the UPF0060 family.

It localises to the cell inner membrane. This Photobacterium profundum (strain SS9) protein is UPF0060 membrane protein PBPRB0495.